Consider the following 343-residue polypeptide: Peptide methionine sulfoxide reductase msrA/msrB (343 aa).

Residues 21–174 (KVIYLAGGCF…PNGYCHIDLK (154 aa)) form a peptide methionine sulfoxide reductase A region. The active-site Cysteine sulfenic acid (-SOH) intermediate is cysteine 29. The MsrB domain occupies 191 to 314 (DEVLKKKLTQ…NSASLRFIPL (124 aa)). Cysteine 303 serves as the catalytic Nucleophile.

The protein in the N-terminal section; belongs to the MsrA Met sulfoxide reductase family. It in the C-terminal section; belongs to the MsrB Met sulfoxide reductase family.

The enzyme catalyses L-methionyl-[protein] + [thioredoxin]-disulfide + H2O = L-methionyl-(S)-S-oxide-[protein] + [thioredoxin]-dithiol. It carries out the reaction [thioredoxin]-disulfide + L-methionine + H2O = L-methionine (S)-S-oxide + [thioredoxin]-dithiol. It catalyses the reaction L-methionyl-[protein] + [thioredoxin]-disulfide + H2O = L-methionyl-(R)-S-oxide-[protein] + [thioredoxin]-dithiol. Functionally, has an important function as a repair enzyme for proteins that have been inactivated by oxidation. Catalyzes the reversible oxidation-reduction of methionine sulfoxide in proteins to methionine. The protein is Peptide methionine sulfoxide reductase msrA/msrB of Enterococcus faecalis (Streptococcus faecalis).